The primary structure comprises 1318 residues: DNA-directed RNA polymerase subunit beta' (1318 aa).

Cys60, Cys62, Cys75, and Cys78 together coordinate Zn(2+). Residues Asp535, Asp537, and Asp539 each coordinate Mg(2+). Zn(2+) is bound by residues Cys890, Cys967, Cys974, and Cys977.

The protein belongs to the RNA polymerase beta' chain family. As to quaternary structure, the RNAP catalytic core consists of 2 alpha, 1 beta, 1 beta' and 1 omega subunit. When a sigma factor is associated with the core the holoenzyme is formed, which can initiate transcription. Mg(2+) is required as a cofactor. It depends on Zn(2+) as a cofactor.

It catalyses the reaction RNA(n) + a ribonucleoside 5'-triphosphate = RNA(n+1) + diphosphate. In terms of biological role, DNA-dependent RNA polymerase catalyzes the transcription of DNA into RNA using the four ribonucleoside triphosphates as substrates. This is DNA-directed RNA polymerase subunit beta' from Rhodococcus jostii (strain RHA1).